Here is a 409-residue protein sequence, read N- to C-terminus: Elongation factor Tu, chloroplastic (409 aa).

The tr-type G domain occupies 10–214 (KPHVNIGTIG…KIDEYIPTPE (205 aa)). Residues 19–26 (GHVDHGKT) are G1. 19–26 (GHVDHGKT) lines the GTP pocket. Threonine 26 is a Mg(2+) binding site. The segment at 60–64 (GITIN) is G2. A G3 region spans residues 81-84 (DCPG). GTP is bound by residues 81-85 (DCPGH) and 136-139 (NKAD). Positions 136 to 139 (NKAD) are G4. Positions 174–176 (SAL) are G5.

Belongs to the TRAFAC class translation factor GTPase superfamily. Classic translation factor GTPase family. EF-Tu/EF-1A subfamily.

The protein localises to the plastid. It localises to the chloroplast. It carries out the reaction GTP + H2O = GDP + phosphate + H(+). Its function is as follows. GTP hydrolase that promotes the GTP-dependent binding of aminoacyl-tRNA to the A-site of ribosomes during protein biosynthesis. The protein is Elongation factor Tu, chloroplastic (tufA) of Rhodomonas salina (Cryptomonas salina).